A 612-amino-acid chain; its full sequence is Peroxisomal carnitine O-octanoyltransferase (612 aa).

An N-acetylmethionine modification is found at Met1. N6-succinyllysine occurs at positions 40 and 57. The active-site Proton acceptor is the His327. CoA is bound by residues Lys406 and 410–417; that span reads KEEALHPD. At Lys406 the chain carries N6-acetyllysine; alternate. The residue at position 406 (Lys406) is an N6-succinyllysine; alternate. (R)-carnitine is bound by residues Tyr439, Thr441, and Thr452. A Microbody targeting signal motif is present at residues 610 to 612; it reads AHL.

This sequence belongs to the carnitine/choline acetyltransferase family.

The protein resides in the peroxisome. The enzyme catalyses octanoyl-CoA + (R)-carnitine = O-octanoyl-(R)-carnitine + CoA. It carries out the reaction 4,8-dimethylnonanoyl-CoA + (R)-carnitine = O-4,8-dimethylnonanoyl-(R)-carnitine + CoA. Its pathway is lipid metabolism; fatty acid beta-oxidation. Beta-oxidation of fatty acids. The highest activity concerns the C6 to C10 chain length substrate. This chain is Peroxisomal carnitine O-octanoyltransferase (Crot), found in Mus musculus (Mouse).